A 144-amino-acid chain; its full sequence is Glycine-rich protein DC9.1 (144 aa).

The chain crosses the membrane as a helical span at residues 5–25 (IFLLLGLSIAFAILISSEVAA). Repeat copies occupy residues 37–42 (GYNNGG), 43–48 (GYHNGG), 50–55 (GYNNGG), 56–61 (GYHNGG), 63–68 (GYNNGG), 69–74 (GYHNGG), 76–81 (GYNNGG), 82–87 (GYHNGG), 89–94 (GYNNGG), 102–107 (GYNNGG), and 108–113 (GHHGGG). The tract at residues 37–113 (GYNNGGGYHN…NNGGGHHGGG (77 aa)) is 11 X 6 AA tandem repeats of G-Y-[NH]-N-G -G.

Belongs to the GRP family.

The protein resides in the membrane. This is Glycine-rich protein DC9.1 from Daucus carota (Wild carrot).